A 554-amino-acid polypeptide reads, in one-letter code: DNA mismatch repair protein MutL (554 aa).

The protein belongs to the DNA mismatch repair MutL/HexB family.

Its function is as follows. This protein is involved in the repair of mismatches in DNA. It is required for dam-dependent methyl-directed DNA mismatch repair. May act as a 'molecular matchmaker', a protein that promotes the formation of a stable complex between two or more DNA-binding proteins in an ATP-dependent manner without itself being part of a final effector complex. The protein is DNA mismatch repair protein MutL of Crocosphaera subtropica (strain ATCC 51142 / BH68) (Cyanothece sp. (strain ATCC 51142)).